The chain runs to 571 residues: Membrane protein insertase YidC (571 aa).

A helical transmembrane segment spans residues 4–24; sequence TRVFLIFAWLMVAVLLWMEWS. The tract at residues 29–78 is disordered; it reads APTPAPTTTSAPAAAQSVPGANPGAIPSAQVPGAPGQAAAQAQASATPAS. 2 stretches are compositionally biased toward low complexity: residues 34 to 43 and 55 to 78; these read PTTTSAPAAA and PSAQ…TPAS. The next 4 helical transmembrane spans lie at 369–389, 440–460, 483–503, and 518–538; these read LVGN…LVLY, GGCL…WVLV, YFIL…LTPA, and PLVF…YWVV.

Belongs to the OXA1/ALB3/YidC family. Type 1 subfamily. As to quaternary structure, interacts with the Sec translocase complex via SecD. Specifically interacts with transmembrane segments of nascent integral membrane proteins during membrane integration.

The protein resides in the cell inner membrane. Required for the insertion and/or proper folding and/or complex formation of integral membrane proteins into the membrane. Involved in integration of membrane proteins that insert both dependently and independently of the Sec translocase complex, as well as at least some lipoproteins. Aids folding of multispanning membrane proteins. This chain is Membrane protein insertase YidC, found in Stenotrophomonas maltophilia (strain K279a).